We begin with the raw amino-acid sequence, 281 residues long: ATP synthase gamma chain (281 aa).

This sequence belongs to the ATPase gamma chain family. As to quaternary structure, F-type ATPases have 2 components, CF(1) - the catalytic core - and CF(0) - the membrane proton channel. CF(1) has five subunits: alpha(3), beta(3), gamma(1), delta(1), epsilon(1). CF(0) has three main subunits: a, b and c.

The protein resides in the cell membrane. Its function is as follows. Produces ATP from ADP in the presence of a proton gradient across the membrane. The gamma chain is believed to be important in regulating ATPase activity and the flow of protons through the CF(0) complex. The sequence is that of ATP synthase gamma chain from Mesoplasma florum (strain ATCC 33453 / NBRC 100688 / NCTC 11704 / L1) (Acholeplasma florum).